A 361-amino-acid polypeptide reads, in one-letter code: MSQLFNFSAGPAMLPVDVLKQAQEELLNWNGQGVSVMEISHRDPVYVHMAREAEQDLRDLLNVPDDYEVLFLQGGGRGQFSAVPQNIASPDATVDYLDTGIWSGFAIREAEKFVSKVNVAGQVQEGAKGKEIQSPENWKLSENAAYFHYCPNETVDGIALHEIPDVKAPIVADMSSNILSEPLDVSKFGVIYAGAQKNIGPSGFAIAIVKKSLLGHPQKQVSSIMDYQLQAKDGSMYNTPNTFAWYLAGLVFKWLKAQGGLTAMGERNRHKAQLLYDFVDKSDFYRNDINPAYRSIMNIPFQLAYDKLDAEFLQGAKNQGLLGLKGHRFVGGMRASIYNAMPVEGVEALLNYMADFERKLG.

L-glutamate is bound at residue R42. Pyridoxal 5'-phosphate contacts are provided by residues 76 to 77 (GR), W102, T154, D173, and Q196. K197 carries the post-translational modification N6-(pyridoxal phosphate)lysine. 238-239 (NT) lines the pyridoxal 5'-phosphate pocket.

The protein belongs to the class-V pyridoxal-phosphate-dependent aminotransferase family. SerC subfamily. Homodimer. It depends on pyridoxal 5'-phosphate as a cofactor.

It localises to the cytoplasm. It catalyses the reaction O-phospho-L-serine + 2-oxoglutarate = 3-phosphooxypyruvate + L-glutamate. The enzyme catalyses 4-(phosphooxy)-L-threonine + 2-oxoglutarate = (R)-3-hydroxy-2-oxo-4-phosphooxybutanoate + L-glutamate. The protein operates within amino-acid biosynthesis; L-serine biosynthesis; L-serine from 3-phospho-D-glycerate: step 2/3. It participates in cofactor biosynthesis; pyridoxine 5'-phosphate biosynthesis; pyridoxine 5'-phosphate from D-erythrose 4-phosphate: step 3/5. Its function is as follows. Catalyzes the reversible conversion of 3-phosphohydroxypyruvate to phosphoserine and of 3-hydroxy-2-oxo-4-phosphonooxybutanoate to phosphohydroxythreonine. This Idiomarina loihiensis (strain ATCC BAA-735 / DSM 15497 / L2-TR) protein is Phosphoserine aminotransferase.